A 154-amino-acid chain; its full sequence is Large ribosomal subunit protein uL13 (154 aa).

Belongs to the universal ribosomal protein uL13 family. Part of the 50S ribosomal subunit.

Its function is as follows. This protein is one of the early assembly proteins of the 50S ribosomal subunit, although it is not seen to bind rRNA by itself. It is important during the early stages of 50S assembly. In Brucella canis (strain ATCC 23365 / NCTC 10854 / RM-666), this protein is Large ribosomal subunit protein uL13.